We begin with the raw amino-acid sequence, 117 residues long: Ribulose bisphosphate carboxylase small subunit 1 (117 aa).

It belongs to the RuBisCO small chain family. Heterohexadecamer of 8 large and 8 small subunits.

Functionally, ruBisCO catalyzes two reactions: the carboxylation of D-ribulose 1,5-bisphosphate, the primary event in carbon dioxide fixation, as well as the oxidative fragmentation of the pentose substrate. Both reactions occur simultaneously and in competition at the same active site. Although the small subunit is not catalytic it is essential for maximal activity. This is Ribulose bisphosphate carboxylase small subunit 1 from Hydrogenovibrio marinus.